A 382-amino-acid chain; its full sequence is Alanine racemase (382 aa).

Lys-39 (proton acceptor; specific for D-alanine) is an active-site residue. Lys-39 is subject to N6-(pyridoxal phosphate)lysine. Residue Arg-138 participates in substrate binding. The Proton acceptor; specific for L-alanine role is filled by Tyr-265. Met-312 contacts substrate.

Belongs to the alanine racemase family. The cofactor is pyridoxal 5'-phosphate.

The enzyme catalyses L-alanine = D-alanine. The protein operates within amino-acid biosynthesis; D-alanine biosynthesis; D-alanine from L-alanine: step 1/1. Catalyzes the interconversion of L-alanine and D-alanine. May also act on other amino acids. This is Alanine racemase (alr) from Staphylococcus saprophyticus subsp. saprophyticus (strain ATCC 15305 / DSM 20229 / NCIMB 8711 / NCTC 7292 / S-41).